We begin with the raw amino-acid sequence, 162 residues long: Proepiregulin (162 aa).

The first 22 residues, 1–22 (METFPAAWVLALLCLGSHLLQA), serve as a signal peptide directing secretion. Positions 23–55 (VISTTVIPSCIPEESEDNCTALVQMEDDPRVAQ) are excised as a propeptide. N-linked (GlcNAc...) asparagine glycosylation is present at Asn-40. In terms of domain architecture, EGF-like spans 57 to 97 (LITKCSSDMDGYCLHGHCIYLVDMSEKYCRCEVGYTGLRCE). 3 disulfides stabilise this stretch: Cys-61-Cys-74, Cys-69-Cys-85, and Cys-87-Cys-96. The propeptide at 102-162 (TVHQPLSREY…TSGGPGLPQV (61 aa)) is removed in mature form. Residues 113–133 (ALTVILVFLFLIVTAGSMYYF) form a helical membrane-spanning segment.

Interacts with EGFR and ERBB4.

The protein resides in the secreted. It localises to the extracellular space. It is found in the cell membrane. Its function is as follows. Ligand of the EGF receptor/EGFR and ERBB4. Stimulates EGFR and ERBB4 tyrosine phosphorylation. Contributes to inflammation, wound healing, tissue repair, and oocyte maturation by regulating angiogenesis and vascular remodeling and by stimulating cell proliferation. In Rattus norvegicus (Rat), this protein is Proepiregulin (Ereg).